The primary structure comprises 473 residues: MTERPLTPEAGEAIAAIATPVGVGALAIVRMSGRGVLEIADRVFRKKGGTAFSFKEAEGFSAHFGTLSDSRGMVDEVIALVFRAPSSFTMEDMVEFTCHGGPVVVRHLLQALLDSGCRLAEPGEFTRRAFLSGRIDLLQAEAIGEMIHARTESAFRTAVTQMQGNLSRHLQEMRAGLLQSCALLELELDFSEDDVEFQSRDALRLEVGRLQGEILRLVESYREGHLLTEGVAAVIAGRPNAGKSTLLNALLGHERAIVSHMPGTTRDYIEECFIHEKTMFRLTDTAGLRHSDEEVEHEGIRRSYRKISEADLMLYIIDSSEGDMQQEAAAARELRQRHPESRMIVVANKTDLAPDAGGMIAQLQSETACPVIAMAASKGDGLNELKSTMAGMVEGLDKLHEASVLVTSLRHYEALRNAADSLDNALQLITAREPAELIAFELRSALDYVGEITGKVVSQELLNTIFDQFCIGK.

Arginine 30, glutamate 95, and arginine 134 together coordinate (6S)-5-formyl-5,6,7,8-tetrahydrofolate. The TrmE-type G domain occupies 230–394 (GVAAVIAGRP…LKSTMAGMVE (165 aa)). GTP contacts are provided by residues 240–245 (NAGKST), 259–265 (SHMPGTT), and 284–287 (DTAG). Residues serine 244 and threonine 265 each contribute to the Mg(2+) site. (6S)-5-formyl-5,6,7,8-tetrahydrofolate is bound at residue lysine 473.

Belongs to the TRAFAC class TrmE-Era-EngA-EngB-Septin-like GTPase superfamily. TrmE GTPase family. Homodimer. Heterotetramer of two MnmE and two MnmG subunits. K(+) is required as a cofactor.

Its subcellular location is the cytoplasm. Its function is as follows. Exhibits a very high intrinsic GTPase hydrolysis rate. Involved in the addition of a carboxymethylaminomethyl (cmnm) group at the wobble position (U34) of certain tRNAs, forming tRNA-cmnm(5)s(2)U34. This chain is tRNA modification GTPase MnmE, found in Chlorobium phaeovibrioides (strain DSM 265 / 1930) (Prosthecochloris vibrioformis (strain DSM 265)).